Consider the following 595-residue polypeptide: Aspartate--tRNA(Asp/Asn) ligase (595 aa).

Glu-175 lines the L-aspartate pocket. The segment at 199-202 is aspartate; that stretch reads QQYK. Positions 221 and 454 each coordinate L-aspartate. Residue 221 to 223 participates in ATP binding; it reads RDE. An ATP-binding site is contributed by Glu-488. Arg-495 is an L-aspartate binding site. 540-543 is an ATP binding site; it reads GIDR.

The protein belongs to the class-II aminoacyl-tRNA synthetase family. Type 1 subfamily. In terms of assembly, homodimer.

It localises to the cytoplasm. It carries out the reaction tRNA(Asx) + L-aspartate + ATP = L-aspartyl-tRNA(Asx) + AMP + diphosphate. Functionally, aspartyl-tRNA synthetase with relaxed tRNA specificity since it is able to aspartylate not only its cognate tRNA(Asp) but also tRNA(Asn). Reaction proceeds in two steps: L-aspartate is first activated by ATP to form Asp-AMP and then transferred to the acceptor end of tRNA(Asp/Asn). The protein is Aspartate--tRNA(Asp/Asn) ligase of Sinorhizobium medicae (strain WSM419) (Ensifer medicae).